The primary structure comprises 794 residues: Furin (794 aa).

The N-terminal stretch at 1–26 is a signal peptide; it reads MELRPWLLWVVAATGTLVLLAADAQG. The propeptide at 27-107 is inhibition peptide; sequence QKVFTNTWAV…QQVAKRRTKR (81 aa). The Lumenal segment spans residues 108–715; the sequence is DVYQEPTDPK…AGLLPSHLPE (608 aa). Aspartate 115 is a Ca(2+) binding site. The 315-residue stretch at 121–435 folds into the Peptidase S8 domain; the sequence is QWYLSGVTQR…YGLLDAGAMV (315 aa). The Charge relay system role is filled by aspartate 153. Aspartate 154 lines the substrate pocket. 4 residues coordinate Ca(2+): aspartate 162, aspartate 174, aspartate 179, and aspartate 181. The segment at 162–183 is disordered; it reads DLAGNYDPGASFDVNDQDPDPQ. 191–192 contributes to the substrate binding site; the sequence is DN. Histidine 194 (charge relay system) is an active-site residue. Ca(2+) contacts are provided by valine 205, asparagine 208, valine 210, and glycine 212. 2 disulfides stabilise this stretch: cysteine 211–cysteine 360 and cysteine 303–cysteine 333. Substrate is bound by residues glutamate 236, 253 to 258, aspartate 264, and 292 to 295; these read SWGPED and ASGN. Aspartate 258 provides a ligand contact to Ca(2+). A Ca(2+)-binding site is contributed by aspartate 301. Substrate contacts are provided by aspartate 306 and tyrosine 308. Glutamate 331 lines the Ca(2+) pocket. Serine 368 acts as the Charge relay system in catalysis. Residue serine 368 participates in substrate binding. N-linked (GlcNAc...) asparagine glycans are attached at residues asparagine 387 and asparagine 440. The region spanning 444–576 is the P/Homo B domain; that stretch reads VAPQRKCIID…TLVLYGTAPE (133 aa). Cysteine 450 and cysteine 474 are disulfide-bonded. A Cell attachment site motif is present at residues 498 to 500; that stretch reads RGD. N-linked (GlcNAc...) asparagine glycosylation is present at asparagine 553. 2 FU repeats span residues 577-620 and 638-681; these read GLPV…GFAP and ASVC…QSQS. Residues 673 to 696 form a disordered region; that stretch reads QTCSRQSQSSRESPPQQQPPRLPP. A compositionally biased stretch (low complexity) spans 676–687; sequence SRQSQSSRESPP. A helical membrane pass occupies residues 716–738; it reads VVAGLSCAFIVLVFVTVFLVLQL. Residues 739–794 are Cytoplasmic-facing; the sequence is RSGFSFRGVKVYTMDRGLISYKGLPPEAWQEECPSDSEEDEGRGERTAFIKDQSAL. The tract at residues 759-762 is cell surface signal; it reads YKGL. Over residues 767–780 the composition is skewed to acidic residues; sequence WQEECPSDSEEDEG. The interval 767–794 is disordered; the sequence is WQEECPSDSEEDEGRGERTAFIKDQSAL. Phosphoserine; by CK2 occurs at positions 773 and 775. A Trans Golgi network signal motif is present at residues 773-779; that stretch reads SDSEEDE.

The protein belongs to the peptidase S8 family. Furin subfamily. As to quaternary structure, interacts with FLNA. Binds to PACS1 which mediates TGN localization and connection to clathrin adapters. Interacts with LAMP1, LAMP2 and LAMP3. Ca(2+) is required as a cofactor. Post-translationally, the inhibition peptide, which plays the role of an intramolecular chaperone, is autocatalytically removed in the endoplasmic reticulum (ER) and remains non-covalently bound to furin as a potent autoinhibitor. Following transport to the trans Golgi, a second cleavage within the inhibition propeptide results in propeptide dissociation and furin activation. In terms of processing, phosphorylation is required for TGN localization of the endoprotease. In vivo, exists as di-, mono- and non-phosphorylated forms. Seems to be expressed ubiquitously.

It is found in the golgi apparatus. The protein localises to the trans-Golgi network membrane. It localises to the cell membrane. The protein resides in the secreted. Its subcellular location is the endosome membrane. The catalysed reaction is Release of mature proteins from their proproteins by cleavage of -Arg-Xaa-Yaa-Arg-|-Zaa- bonds, where Xaa can be any amino acid and Yaa is Arg or Lys. Releases albumin, complement component C3 and von Willebrand factor from their respective precursors.. Its activity is regulated as follows. Inhibited by the not secondly cleaved propeptide. Inhibited by m-guanidinomethyl-phenylacetyl-Arg-Val-Arg-(amidomethyl)-benzamidine (m-guanidinomethyl-Phac-RVR-Amb) and 4-guanidinomethyl-phenylacetyl-Arg-Tle-Arg-4-amidinobenzylamide (MI-1148). Inhibited by Decanoyl-Arg-Val-Lys-Arg-chloromethylketone (decanoyl-RVKR-CMK). Inhibited by heparin/heparan sulfate-binding. Functionally, ubiquitous endoprotease within constitutive secretory pathways capable of cleavage at the RX(K/R)R consensus motif. Mediates processing of TGFB1, an essential step in TGF-beta-1 activation. Converts through proteolytic cleavage the non-functional Brain natriuretic factor prohormone into its active hormone BNP(1-32). By mediating processing of accessory subunit ATP6AP1/Ac45 of the V-ATPase, regulates the acidification of dense-core secretory granules in islets of Langerhans cells. Its function is as follows. (Microbial infection) Cleaves and activates diphtheria toxin DT. In terms of biological role, (Microbial infection) Cleaves and activates anthrax toxin protective antigen (PA). (Microbial infection) Cleaves and activates HIV-1 virus Envelope glycoprotein gp160. Functionally, (Microbial infection) Required for H7N1 and H5N1 influenza virus infection probably by cleaving hemagglutinin. Its function is as follows. (Microbial infection) Able to cleave S.pneumoniae serine-rich repeat protein PsrP. In terms of biological role, (Microbial infection) Facilitates human coronaviruses EMC and SARS-CoV-2 infections by proteolytically cleaving the spike protein at the monobasic S1/S2 cleavage site. This cleavage is essential for spike protein-mediated cell-cell fusion and entry into human lung cells. (Microbial infection) Facilitates mumps virus infection by proteolytically cleaving the viral fusion protein F. The chain is Furin from Homo sapiens (Human).